The chain runs to 169 residues: MDPLKICENYLTFRSIIKGSTFSPGVFRRWRFHGLADVVGNIVEREEGRFWEIVPETHTLWAVFRGGFTVAPFTEILTSLQLENRGRQLAFLAFLSFLLRNWPSDSVVSEDARLDLVCAPAWSRIQIWSQAARLINDLPESVFEGQGSVVEEEQGEEHLARDSDDPFFD.

The disordered stretch occupies residues 147 to 169; that stretch reads GSVVEEEQGEEHLARDSDDPFFD. Basic and acidic residues predominate over residues 156–169; that stretch reads EEHLARDSDDPFFD.

Belongs to the adenoviridae E1B 19 kDa protein family.

This Canine adenovirus serotype 1 (strain Glaxo) (CAdV-1) protein is E1B protein, small T-antigen.